We begin with the raw amino-acid sequence, 247 residues long: Small ribosomal subunit protein uS2 (247 aa).

The protein belongs to the universal ribosomal protein uS2 family.

The sequence is that of Small ribosomal subunit protein uS2 from Ralstonia nicotianae (strain ATCC BAA-1114 / GMI1000) (Ralstonia solanacearum).